A 764-amino-acid chain; its full sequence is 5-methyltetrahydropteroyltriglutamate--homocysteine methyltransferase (764 aa).

5-methyltetrahydropteroyltri-L-glutamate-binding positions include 16–19 and Lys-112; that span reads RELK. Residues 431–433 and Glu-484 contribute to the L-homocysteine site; that span reads IGS. Residues 431–433 and Glu-484 contribute to the L-methionine site; that span reads IGS. Residues 515 to 516 and Trp-561 each bind 5-methyltetrahydropteroyltri-L-glutamate; that span reads RC. Asp-599 is an L-homocysteine binding site. Asp-599 is a binding site for L-methionine. Glu-605 serves as a coordination point for 5-methyltetrahydropteroyltri-L-glutamate. Residues His-641, Cys-643, and Glu-665 each contribute to the Zn(2+) site. Catalysis depends on His-694, which acts as the Proton donor. Cys-726 contributes to the Zn(2+) binding site.

The protein belongs to the vitamin-B12 independent methionine synthase family. Zn(2+) is required as a cofactor.

It catalyses the reaction 5-methyltetrahydropteroyltri-L-glutamate + L-homocysteine = tetrahydropteroyltri-L-glutamate + L-methionine. Its pathway is amino-acid biosynthesis; L-methionine biosynthesis via de novo pathway; L-methionine from L-homocysteine (MetE route): step 1/1. In terms of biological role, catalyzes the transfer of a methyl group from 5-methyltetrahydrofolate to homocysteine resulting in methionine formation. The protein is 5-methyltetrahydropteroyltriglutamate--homocysteine methyltransferase of Paraburkholderia xenovorans (strain LB400).